Here is a 65-residue protein sequence, read N- to C-terminus: Large ribosomal subunit protein bL35 (65 aa).

Residues Met1–Val16 show a composition bias toward basic residues. Positions Met1–Gln26 are disordered.

The protein belongs to the bacterial ribosomal protein bL35 family.

The chain is Large ribosomal subunit protein bL35 from Azoarcus sp. (strain BH72).